Reading from the N-terminus, the 203-residue chain is Cell division protein SepF (203 aa).

Disordered stretches follow at residues 26-51 (DGELEQVQPAYQEEPPRRSAPERRGQ) and 167-203 (GTASGSQEGDLLARTARRSEEGDRTGADRSKFDWRNQ). Composition is skewed to basic and acidic residues over residues 39–50 (EPPRRSAPERRG) and 183–203 (RRSEEGDRTGADRSKFDWRNQ).

The protein belongs to the SepF family. In terms of assembly, homodimer. Interacts with FtsZ.

The protein resides in the cytoplasm. Its function is as follows. Cell division protein that is part of the divisome complex and is recruited early to the Z-ring. Probably stimulates Z-ring formation, perhaps through the cross-linking of FtsZ protofilaments. Its function overlaps with FtsA. In Symbiobacterium thermophilum (strain DSM 24528 / JCM 14929 / IAM 14863 / T), this protein is Cell division protein SepF.